A 364-amino-acid polypeptide reads, in one-letter code: sn-glycerol-3-phosphate import ATP-binding protein UgpC (364 aa).

One can recognise an ABC transporter domain in the interval Val-4 to Ile-235. Gly-37–Ser-44 provides a ligand contact to ATP.

This sequence belongs to the ABC transporter superfamily. sn-glycerol-3-phosphate importer (TC 3.A.1.1.3) family. As to quaternary structure, the complex is composed of two ATP-binding proteins (UgpC), two transmembrane proteins (UgpA and UgpE) and a solute-binding protein (UgpB).

It is found in the cell inner membrane. It catalyses the reaction sn-glycerol 3-phosphate(out) + ATP + H2O = sn-glycerol 3-phosphate(in) + ADP + phosphate + H(+). In terms of biological role, part of the ABC transporter complex UgpBAEC involved in sn-glycerol-3-phosphate (G3P) import. Responsible for energy coupling to the transport system. The chain is sn-glycerol-3-phosphate import ATP-binding protein UgpC from Rhodopseudomonas palustris (strain BisB5).